The chain runs to 456 residues: Enolase (456 aa).

Gln-164 serves as a coordination point for (2R)-2-phosphoglycerate. Glu-207 serves as the catalytic Proton donor. The Mg(2+) site is built by Asp-244, Glu-287, and Asp-314. Residues Lys-339, Arg-368, Ser-369, and Lys-390 each coordinate (2R)-2-phosphoglycerate. Lys-339 serves as the catalytic Proton acceptor.

The protein belongs to the enolase family. Component of the RNA degradosome, a multiprotein complex involved in RNA processing and mRNA degradation. It depends on Mg(2+) as a cofactor.

The protein localises to the cytoplasm. The protein resides in the secreted. It is found in the cell surface. It carries out the reaction (2R)-2-phosphoglycerate = phosphoenolpyruvate + H2O. It participates in carbohydrate degradation; glycolysis; pyruvate from D-glyceraldehyde 3-phosphate: step 4/5. Its function is as follows. Catalyzes the reversible conversion of 2-phosphoglycerate (2-PG) into phosphoenolpyruvate (PEP). It is essential for the degradation of carbohydrates via glycolysis. This Francisella tularensis subsp. holarctica (strain OSU18) protein is Enolase.